Here is a 274-residue protein sequence, read N- to C-terminus: DegV domain-containing protein Cgl2349/cg2579 (274 aa).

One can recognise a DegV domain in the interval 3-259 (VRVIVDSSAC…PGAVSVSAVF (257 aa)). 2 residues coordinate hexadecanoate: T39 and S73.

As to quaternary structure, monomer.

Its function is as follows. Binds long-chain fatty acids, such as palmitate, and may play a role in lipid transport or fatty acid metabolism. This Corynebacterium glutamicum (strain ATCC 13032 / DSM 20300 / JCM 1318 / BCRC 11384 / CCUG 27702 / LMG 3730 / NBRC 12168 / NCIMB 10025 / NRRL B-2784 / 534) protein is DegV domain-containing protein Cgl2349/cg2579.